The primary structure comprises 274 residues: Formamidopyrimidine-DNA glycosylase (274 aa).

The Schiff-base intermediate with DNA role is filled by Pro-2. The Proton donor role is filled by Glu-3. Lys-58 serves as the catalytic Proton donor; for beta-elimination activity. Residues His-91, Arg-110, and Lys-152 each coordinate DNA. An FPG-type zinc finger spans residues 237 to 271 (KVYGRKNLPCLVCENKIETVVIAGRHSAFCPHCQP). Arg-261 (proton donor; for delta-elimination activity) is an active-site residue.

The protein belongs to the FPG family. In terms of assembly, monomer. It depends on Zn(2+) as a cofactor.

The enzyme catalyses Hydrolysis of DNA containing ring-opened 7-methylguanine residues, releasing 2,6-diamino-4-hydroxy-5-(N-methyl)formamidopyrimidine.. It catalyses the reaction 2'-deoxyribonucleotide-(2'-deoxyribose 5'-phosphate)-2'-deoxyribonucleotide-DNA = a 3'-end 2'-deoxyribonucleotide-(2,3-dehydro-2,3-deoxyribose 5'-phosphate)-DNA + a 5'-end 5'-phospho-2'-deoxyribonucleoside-DNA + H(+). In terms of biological role, involved in base excision repair of DNA damaged by oxidation or by mutagenic agents. Acts as a DNA glycosylase that recognizes and removes damaged bases. Has a preference for oxidized purines, such as 7,8-dihydro-8-oxoguanine (8-oxoG). Has AP (apurinic/apyrimidinic) lyase activity and introduces nicks in the DNA strand. Cleaves the DNA backbone by beta-delta elimination to generate a single-strand break at the site of the removed base with both 3'- and 5'-phosphates. In Legionella pneumophila (strain Paris), this protein is Formamidopyrimidine-DNA glycosylase.